A 90-amino-acid polypeptide reads, in one-letter code: Small ribosomal subunit protein bS20 (90 aa).

The protein belongs to the bacterial ribosomal protein bS20 family.

Binds directly to 16S ribosomal RNA. The polypeptide is Small ribosomal subunit protein bS20 (Rickettsia felis (strain ATCC VR-1525 / URRWXCal2) (Rickettsia azadi)).